The chain runs to 276 residues: Small ribosomal subunit protein uS2 (276 aa).

The tract at residues 255–276 (ASATATAAPTEAGAPEPTTDPS) is disordered.

This sequence belongs to the universal ribosomal protein uS2 family.

This is Small ribosomal subunit protein uS2 from Mycolicibacterium paratuberculosis (strain ATCC BAA-968 / K-10) (Mycobacterium paratuberculosis).